Here is a 137-residue protein sequence, read N- to C-terminus: Small ribosomal subunit protein bS6 (137 aa).

The segment at 96–137 is disordered; it reads ITEASPMAKAKDERDTRRSSEERAPRAEATEEAEESAENTAE. Basic and acidic residues predominate over residues 104–124; that stretch reads KAKDERDTRRSSEERAPRAEA. The span at 125–137 shows a compositional bias: acidic residues; sequence TEEAEESAENTAE.

The protein belongs to the bacterial ribosomal protein bS6 family.

Its function is as follows. Binds together with bS18 to 16S ribosomal RNA. This is Small ribosomal subunit protein bS6 from Shewanella pealeana (strain ATCC 700345 / ANG-SQ1).